The following is a 400-amino-acid chain: Polyadenylate-binding protein-interacting protein 1 (400 aa).

Positions 1–10 (MSDSFDRAPE) are enriched in basic and acidic residues. Positions 1–36 (MSDSFDRAPEQTKPQRAPPSSQDKIPQQNSESAMAK) are disordered. Residues 12-32 (TKPQRAPPSSQDKIPQQNSES) show a composition bias toward polar residues. The segment at 37–64 (PQVVVAPVLMSKLSANAPEFYPSGYSSN) is PABPC1-interacting motif-2 (PAM2). The segment at 78–296 (TLSEYVQDFL…LLKLVELRSS (219 aa)) is PAIP1 middle domain (PAIP1M). The MIF4G domain occupies 80 to 297 (SEYVQDFLNH…LKLVELRSSN (218 aa)). Residues 356–376 (DYEENGTDLSGAGDPYLDDID) form a disordered region. Residues 361 to 400 (GTDLSGAGDPYLDDIDDEMDPEIEEAYEKFCLESERKRKQ) form a PABPC1-interacting motif-1 (PAM1) region.

Interacts with the RRM1-RRM2 and C-terminus regions of PABPC1 in a 1:1 stoichiometry. Interacts with EIF4A.

Its subcellular location is the cytoplasm. In terms of biological role, acts as a coactivator in the regulation of translation initiation of poly(A)-containing mRNAs. Its stimulatory activity on translation is mediated via its action on PABPC1. Competes with PAIP2 for binding to PABPC1. Its association with EIF4A and PABPC1 may potentiate contacts between mRNA termini. May also be involved in translationally coupled mRNA turnover. Implicated with other RNA-binding proteins in the cytoplasmic deadenylation/translational and decay interplay of the FOS mRNA mediated by the major coding-region determinant of instability (mCRD) domain. The protein is Polyadenylate-binding protein-interacting protein 1 (Paip1) of Mus musculus (Mouse).